The sequence spans 314 residues: Transcription factor TCP20 (314 aa).

2 disordered regions span residues 1 to 91 and 295 to 314; these read MDPK…RGRR and NHEEHQQESGEKDDSQGSGR. Basic and acidic residues-rich tracts occupy residues 38–49 and 77–89; these read DENRKPTTEIKD and SNKDRHTKVEGRG. The region spanning 78–132 is the TCP domain; the sequence is NKDRHTKVEGRGRRIRMPALCAARIFQLTRELGHKSDGETIQWLLQQAEPSIIAA.

As to quaternary structure, interacts with PURA1. Interacts with SPL.

It localises to the nucleus. Transcription factor that binds to the site II motif (3'-TGGGCC/T-5') in the promoter of PCNA-2 and to 3'-GCCCG/A-5' elements in the promoters of cyclin CYCB1-1 and ribosomal protein genes. The protein is Transcription factor TCP20 (TCP20) of Arabidopsis thaliana (Mouse-ear cress).